A 239-amino-acid chain; its full sequence is Retrotransposon Gag-like protein 6 (239 aa).

A coiled-coil region spans residues 29–69 (LTSLRLTNSALRREASTLRAEKANLTNMLESVMAELTLLRT). Over residues 82-94 (PISSITSNGTRPM) the composition is skewed to polar residues. Disordered regions lie at residues 82–106 (PISSITSNGTRPMTTPPTSLPEPFS) and 214–239 (TGPCPVHPASNGTSPAPALPARARNL). Positions 228 to 239 (PAPALPARARNL) are enriched in low complexity.

It belongs to the LDOC1 family.

The sequence is that of Retrotransposon Gag-like protein 6 from Homo sapiens (Human).